Consider the following 109-residue polypeptide: Probable cytochrome b-c1 complex subunit 7 (109 aa).

The protein belongs to the UQCRB/QCR7 family. Component of the ubiquinol-cytochrome c oxidoreductase (cytochrome b-c1 complex, complex III, CIII), a multisubunit enzyme composed of 3 respiratory subunits cytochrome b, cytochrome c1 and Rieske protein, 2 core protein subunits, and additional low-molecular weight protein subunits. The complex exists as an obligatory dimer and forms supercomplexes (SCs) in the inner mitochondrial membrane with cytochrome c oxidase (complex IV, CIV).

The protein localises to the mitochondrion inner membrane. Its function is as follows. Component of the ubiquinol-cytochrome c oxidoreductase, a multisubunit transmembrane complex that is part of the mitochondrial electron transport chain which drives oxidative phosphorylation. The respiratory chain contains 3 multisubunit complexes succinate dehydrogenase (complex II, CII), ubiquinol-cytochrome c oxidoreductase (cytochrome b-c1 complex, complex III, CIII) and cytochrome c oxidase (complex IV, CIV), that cooperate to transfer electrons derived from NADH and succinate to molecular oxygen, creating an electrochemical gradient over the inner membrane that drives transmembrane transport and the ATP synthase. The cytochrome b-c1 complex catalyzes electron transfer from ubiquinol to cytochrome c, linking this redox reaction to translocation of protons across the mitochondrial inner membrane, with protons being carried across the membrane as hydrogens on the quinol. In the process called Q cycle, 2 protons are consumed from the matrix, 4 protons are released into the intermembrane space and 2 electrons are passed to cytochrome c. This chain is Probable cytochrome b-c1 complex subunit 7, found in Dictyostelium discoideum (Social amoeba).